A 564-amino-acid chain; its full sequence is Alpha-farnesene synthase (564 aa).

The Mg(2+) site is built by D313, D317, T464, and E468. Positions D313–D317 match the DDXXD motif motif.

This sequence belongs to the terpene synthase family. The cofactor is Mg(2+).

It carries out the reaction (2E,6E)-farnesyl diphosphate = (3E,6E)-alpha-farnesene + diphosphate. Its function is as follows. Catalyzes the cyclization of farnesyl diphosphate to (E,E)-alpha-farnesene. The chain is Alpha-farnesene synthase (TPS7) from Ricinus communis (Castor bean).